The following is a 91-amino-acid chain: RNA-binding protein Hfq (91 aa).

Residues 9 to 68 (DPYLNALRRERIPVSIYLVNGIKLQGQIESFDQFVILLKNTVNQMVYKHAISTVVPARSV) enclose the Sm domain. The tract at residues 68–91 (VSHHNNNHHTTPTEAVENVETQAE) is disordered.

Belongs to the Hfq family. In terms of assembly, homohexamer.

In terms of biological role, RNA chaperone that binds small regulatory RNA (sRNAs) and mRNAs to facilitate mRNA translational regulation in response to envelope stress, environmental stress and changes in metabolite concentrations. Also binds with high specificity to tRNAs. This is RNA-binding protein Hfq from Haemophilus influenzae (strain 86-028NP).